The sequence spans 212 residues: uncharacterized protein (212 aa).

Positions 53, 74, and 97 each coordinate S-adenosyl-L-methionine.

It belongs to the methyltransferase superfamily. YrrT family.

Its function is as follows. Could be a S-adenosyl-L-methionine-dependent methyltransferase. This is an uncharacterized protein from Bacillus mycoides (strain KBAB4) (Bacillus weihenstephanensis).